We begin with the raw amino-acid sequence, 466 residues long: Ribulose bisphosphate carboxylase large chain (466 aa).

Lys-5 carries the post-translational modification N6,N6,N6-trimethyllysine. Asn-114 and Thr-164 together coordinate substrate. Lys-166 acts as the Proton acceptor in catalysis. Lys-168 is a substrate binding site. Residues Lys-192, Asp-194, and Glu-195 each contribute to the Mg(2+) site. N6-carboxylysine is present on Lys-192. The Proton acceptor role is filled by His-285. Substrate contacts are provided by Arg-286, His-318, and Ser-370.

Belongs to the RuBisCO large chain family. Type I subfamily. As to quaternary structure, heterohexadecamer of 8 large chains and 8 small chains; disulfide-linked. The disulfide link is formed within the large subunit homodimers. Mg(2+) serves as cofactor. In terms of processing, the disulfide bond which can form in the large chain dimeric partners within the hexadecamer appears to be associated with oxidative stress and protein turnover.

The protein resides in the plastid. It is found in the chloroplast. The catalysed reaction is 2 (2R)-3-phosphoglycerate + 2 H(+) = D-ribulose 1,5-bisphosphate + CO2 + H2O. The enzyme catalyses D-ribulose 1,5-bisphosphate + O2 = 2-phosphoglycolate + (2R)-3-phosphoglycerate + 2 H(+). Functionally, ruBisCO catalyzes two reactions: the carboxylation of D-ribulose 1,5-bisphosphate, the primary event in carbon dioxide fixation, as well as the oxidative fragmentation of the pentose substrate in the photorespiration process. Both reactions occur simultaneously and in competition at the same active site. In Drosera filiformis (Thread-leaved sundew), this protein is Ribulose bisphosphate carboxylase large chain.